Consider the following 115-residue polypeptide: Large ribosomal subunit protein bL20 (115 aa).

It belongs to the bacterial ribosomal protein bL20 family.

Binds directly to 23S ribosomal RNA and is necessary for the in vitro assembly process of the 50S ribosomal subunit. It is not involved in the protein synthesizing functions of that subunit. The protein is Large ribosomal subunit protein bL20 of Borrelia duttonii (strain Ly).